We begin with the raw amino-acid sequence, 282 residues long: MTLFEAIMLGIVQGLTEFLPISSTAHLKIVPALLGWSDPGAAFTAIIQIGTLAAVLMYFWRDIITIVSAVMKGILKGKPLESNEARMGWMIAAGTIPIVVFGLLFKDQIETTLRSLYWISGALIGLALLLSLAEWNIKKHLSGGRPLKTMEQIGWKEALLIGLAQSIALIPGSSRSGVTITGGLFLNLSRETAARFSFLLSLPAVFAAGIFQLYKTWDIITASPGNIMNLAAATFTSAVVGYLSIAFLLSYLKKHTTTIFIIYRLLAGILLLLLLSTGTLLP.

Transmembrane regions (helical) follow at residues Gly-40–Trp-60, Ala-85–Phe-105, Ser-115–Trp-135, Ile-153–Ser-173, Ala-193–Leu-213, Leu-230–Ser-250, and Thr-258–Gly-278.

The protein belongs to the UppP family.

The protein resides in the cell inner membrane. It carries out the reaction di-trans,octa-cis-undecaprenyl diphosphate + H2O = di-trans,octa-cis-undecaprenyl phosphate + phosphate + H(+). Functionally, catalyzes the dephosphorylation of undecaprenyl diphosphate (UPP). Confers resistance to bacitracin. This is Undecaprenyl-diphosphatase from Chlorobium phaeovibrioides (strain DSM 265 / 1930) (Prosthecochloris vibrioformis (strain DSM 265)).